The sequence spans 179 residues: Bifunctional protein PyrR (179 aa).

The PRPP-binding signature appears at 97–109; that stretch reads IILTDDVLYTGRT.

The protein belongs to the purine/pyrimidine phosphoribosyltransferase family. PyrR subfamily.

It carries out the reaction UMP + diphosphate = 5-phospho-alpha-D-ribose 1-diphosphate + uracil. Its function is as follows. Regulates the transcription of the pyrimidine nucleotide (pyr) operon in response to exogenous pyrimidines. In terms of biological role, also displays a weak uracil phosphoribosyltransferase activity which is not physiologically significant. The polypeptide is Bifunctional protein PyrR (Elusimicrobium minutum (strain Pei191)).